The sequence spans 792 residues: Probable phosphoketolase (792 aa).

This sequence belongs to the XFP family. The cofactor is thiamine diphosphate.

The polypeptide is Probable phosphoketolase (Brucella melitensis biotype 1 (strain ATCC 23456 / CCUG 17765 / NCTC 10094 / 16M)).